Consider the following 242-residue polypeptide: Zinc-finger homeodomain protein 11 (242 aa).

Residues 31–82 (YKECLKNHAANLGGHALDGCGEFMPSPTATSTDPSSLRCAACGCHRNFHRRD) form a ZF-HD dimerization-type; degenerate zinc finger. Disordered regions lie at residues 83-109 (PSEN…SRHV) and 135-161 (PGPS…RTRT). Residues 156–213 (RKRTRTKFTPEQKIKMRAFAEKAGWKINGCDEKSVREFCNEVGIERGVLKVWMHNNKY) constitute a DNA-binding region (homeobox; atypical).

In terms of assembly, homo- and heterodimer with other ZFHD proteins. Interacts with HIPP20, HIPP21, HIPP22, HIPP23, HIPP24, HIPP26, HIPP27, HIPP30 and MED25 (via ACID domain). Interacts with NAC019, NAC055 and NAC072 (via NAC binding domain). Binds to ZHD1, ZHD2, ZHD3, ZHD4, ZHD5, ZHD6, ZHD7, ZHD8, ZHD9, ZHD12, ZHD13 and ZHD14. In terms of tissue distribution, expressed in roots, inflorescences, open flowers and seeds. Detected in stems and seedlings.

The protein localises to the nucleus. Functionally, transcription factor involved in the up-regulation of several stress-inducible genes. Acts as a transcriptional activator by interacting with MED25 and NAC proteins. Involved in increased drought tolerance. The protein is Zinc-finger homeodomain protein 11 (ZHD11) of Arabidopsis thaliana (Mouse-ear cress).